Here is a 503-residue protein sequence, read N- to C-terminus: Sodium/hydrogen exchanger 3 (503 aa).

At 1-22 (MVIGLSTMLEKTEALFASDHAS) the chain is on the cytoplasmic side. A helical membrane pass occupies residues 23-43 (VVSMNLFVALLCACIVLGHLL). The Vacuolar portion of the chain corresponds to 44-51 (EETRWMNE). N-linked (GlcNAc...) asparagine glycosylation occurs at Asn-50. Residues 52–72 (SITALIIGSCTGIVILLISGG) form a helical membrane-spanning segment. The Cytoplasmic segment spans residues 73–76 (KSSR). Residues 77 to 97 (ILVFSEDLFFIYLLPPIIFNA) constitute an intramembrane region (helical). Topologically, residues 98–109 (GFQVKKKQFFRN) are cytoplasmic. The chain crosses the membrane as a helical span at residues 110–130 (FMTIMLFGAIGTLISFVIISF). The Vacuolar segment spans residues 131–138 (GAKHLFEK). A helical transmembrane segment spans residues 139–159 (MNIGDLTIADYLAIGAIFSAT). Over 160-174 (DSVCTLQVLNQDETP) the chain is Cytoplasmic. A helical membrane pass occupies residues 175–195 (LLYSLVFGEGVVNDATSVVLF). The Vacuolar portion of the chain corresponds to 196–219 (NAIQRFDLTNINSAIALEFAGNFF). Residues 220-240 (YLFILSTALGVAAGLLSAFVI) form a helical membrane-spanning segment. At 241 to 265 (KKLYIGRHSTDREVALMMLLAYLSY) the chain is on the cytoplasmic side. A helical transmembrane segment spans residues 266–286 (MLAELFHLSSILTVFFCGIVM). Residues 287–305 (SHYTWHNVTDKSKVTTKHT) are Vacuolar-facing. N-linked (GlcNAc...) asparagine glycosylation is present at Asn-293. The helical transmembrane segment at 306-326 (FAAMSFLAEIFIFLYVGMDAL) threads the bilayer. Residues 327–345 (DIEKWDVVRNSPGQSIGVS) are Cytoplasmic-facing. Residues 346–366 (SILLGLILLGRAAFVFPLSFL) form a helical membrane-spanning segment. Residues 367 to 383 (SNLTKSSPDEKIDLKKQ) lie on the Vacuolar side of the membrane. Asn-368 is a glycosylation site (N-linked (GlcNAc...) asparagine). The chain crosses the membrane as a helical span at residues 384 to 406 (VTIWWAGLMRGAVSMALAYNQFT). Over 407 to 416 (TSGHTKVLGN) the chain is Cytoplasmic. A helical transmembrane segment spans residues 417–437 (AIMITSTITVVLFSTVVFGLL). At 438–503 (TKPLVKHLQP…FWKSPSRFTH (66 aa)) the chain is on the vacuolar side.

The protein belongs to the monovalent cation:proton antiporter 1 (CPA1) transporter (TC 2.A.36) family. As to expression, expressed in roots.

Its subcellular location is the vacuole membrane. It carries out the reaction Na(+)(in) + H(+)(out) = Na(+)(out) + H(+)(in). The catalysed reaction is K(+)(in) + H(+)(out) = K(+)(out) + H(+)(in). Functionally, may act in low affinity electroneutral exchange of protons for cations such as Na(+) or K(+) across membranes. May also exchange Li(+) and Cs(+) with a lower affinity. The polypeptide is Sodium/hydrogen exchanger 3 (NHX3) (Arabidopsis thaliana (Mouse-ear cress)).